A 340-amino-acid chain; its full sequence is Organic solute transporter subunit alpha (340 aa).

Over 1-48 (MEPGRTHIKLDPRYTAELLELLETNYSISPACFSHPPTAAQLLRALGP) the chain is Extracellular. N-linked (GlcNAc...) asparagine glycosylation occurs at Asn-25. The chain crosses the membrane as a helical span at residues 49–69 (VDIALTIILTFLTTGSVAIFL). Topologically, residues 70 to 87 (EDAVYLYKNTLCPIKKRT) are cytoplasmic. A helical membrane pass occupies residues 88–108 (LIWSSSAPTVVSVFCCFGLWI). At 109–114 (PRALTL) the chain is on the extracellular side. A helical transmembrane segment spans residues 115–135 (VEMAITSFYAVCFYLLMMVMV). Residues 136–181 (EGFGGKKAVLRTLKDTPMRVHTGPCCCCCPCCPPLILTRKKLQLLL) lie on the Cytoplasmic side of the membrane. The helical transmembrane segment at 182–202 (LGPFQYAFFKITLSIVGLFLI) threads the bilayer. Residues 203 to 219 (PDGIYDPGEISEKSAAL) are Extracellular-facing. The helical transmembrane segment at 220–240 (WINNLLAVSTLLALWSLAILF) threads the bilayer. Residues 241–255 (RQAKMHLGEQNMGSK) lie on the Cytoplasmic side of the membrane. The helical transmembrane segment at 256–276 (FALFQVLVILTALQPAIFSIL) threads the bilayer. Residues 277-297 (ANSGQIACSPPYSSKIRSQVM) lie on the Extracellular side of the membrane. The chain crosses the membrane as a helical span at residues 298–317 (NCHMLILETFLMTVLTRMYY). Over 318–340 (RRKDDKVGYEACSLPDLDSALKA) the chain is Cytoplasmic. Ser-330 is subject to Phosphoserine.

The protein belongs to the OST-alpha family. As to quaternary structure, interacts with SLC51B. The Ost-alpha/Ost-beta complex is a heterodimer composed of alpha (SLC51A) and beta (SLC51B) subunit. In terms of processing, N-glycosylated. Present at high levels in ileum. In ileum, it is restricted to the apical domain on the mature villus enterocytes with little detectable expression in the goblet cells or crypt enterocytes (at protein level). Expressed in kidney but not in heart, brain, liver, spleen, embryo, lung, thymus, ovary nor testis.

The protein localises to the cell membrane. The protein resides in the endoplasmic reticulum membrane. It carries out the reaction taurocholate(out) = taurocholate(in). The catalysed reaction is tauroursodeoxycholate(out) = tauroursodeoxycholate(in). The enzyme catalyses glycoursodeoxycholate(out) = glycoursodeoxycholate(in). It catalyses the reaction glycocholate(out) = glycocholate(in). It carries out the reaction taurochenodeoxycholate(out) = taurochenodeoxycholate(in). The catalysed reaction is glycochenodeoxycholate(out) = glycochenodeoxycholate(in). The enzyme catalyses taurodeoxycholate(out) = taurodeoxycholate(in). It catalyses the reaction glycodeoxycholate(out) = glycodeoxycholate(in). It carries out the reaction prostaglandin E2(out) = prostaglandin E2(in). The catalysed reaction is estrone 3-sulfate(out) = estrone 3-sulfate(in). The enzyme catalyses dehydroepiandrosterone 3-sulfate(out) = dehydroepiandrosterone 3-sulfate(in). Functionally, essential component of the Ost-alpha/Ost-beta complex, a heterodimer that acts as the intestinal basolateral transporter responsible for bile acid export from enterocytes into portal blood. Efficiently transports the major species of bile acids (taurocholate). Taurine conjugates are transported more efficiently across the basolateral membrane than glycine-conjugated bile acids. Can also transport steroids such as estrone 3-sulfate and dehydroepiandrosterone 3-sulfate, therefore playing a role in the enterohepatic circulation of sterols. Able to transport eicosanoids such as prostaglandin E2. This chain is Organic solute transporter subunit alpha (Slc51a), found in Mus musculus (Mouse).